We begin with the raw amino-acid sequence, 180 residues long: Progesterone receptor (180 aa).

The NR C4-type zinc-finger motif lies at 1 to 11 (KNCPACRLRKC). The segment at residues 1 to 16 (KNCPACRLRKCCQAGM) is a DNA-binding region (nuclear receptor). Position 60 is a phosphoserine (S60). The NR LBD domain occupies 63 to 180 (QEIQLFPPLI…QRMKESSFYS (118 aa)). Residues 71–180 (LINLLLSIEP…QRMKESSFYS (110 aa)) form an AF2; mediates transcriptional activation region. Progesterone is bound at residue R150.

It belongs to the nuclear hormone receptor family. NR3 subfamily. Interacts with SMARD1 and UNC45A. Interacts with CUEDC2; the interaction promotes ubiquitination, decreases sumoylation, and represses transcriptional activity. Interacts with PIAS3; the interaction promotes sumoylation of PR in a hormone-dependent manner, inhibits DNA-binding, and alters nuclear export. Interacts with SP1; the interaction requires ligand-induced phosphorylation by ERK1/2-MAPK. Interacts with PRMT2. Interacts with NCOA2 and NCOA1. Interacts with KLF9. Interacts with GTF2B. In terms of processing, phosphorylated on multiple serine sites. Several of these sites are hormone-dependent. Post-translationally, sumoylation is hormone-dependent and represses transcriptional activity. Sumoylation on all three sites is enhanced by PIAS3. Desumoylated by SENP1. Sumoylation is repressed by ubiquitination and modulated by phosphorylation. Ubiquitination is hormone-dependent and represses sumoylation. In terms of processing, palmitoylated by ZDHHC7 and ZDHHC21. Palmitoylation is required for plasma membrane targeting and for rapid intracellular signaling via ERK and AKT kinases and cAMP generation.

Its subcellular location is the nucleus. The protein resides in the cytoplasm. The steroid hormones and their receptors are involved in the regulation of eukaryotic gene expression and affect cellular proliferation and differentiation in target tissues. Transcriptional activator of several progesteron-dependent promoters in a variety of cell types. Involved in activation of SRC-dependent MAPK signaling on hormone stimulation. The sequence is that of Progesterone receptor (PGR) from Notamacropus eugenii (Tammar wallaby).